Here is a 302-residue protein sequence, read N- to C-terminus: MIFPNIDPVVHIGPWALQFGPLALRWYALAYVAGILLGWRYALRLTRTASVWGARTPTATALQIDDLVLWITLGIIVGGRLGYFVFYMLMNDDQRAWLAAHPMDVFKIWEGGMSFHGGFLGVCAAIILFARQQKIDMLRLGDLIAPVAPIGIFFGRIANFINGELWGRVTDGPFGIIFCNETIQANHPQRICPAGPLPRHPSQLYEAALEGLVLFLILAFAIYRLKWLRRRGALVATFLLGYGLARLALENVRNPDVGMPEFPLGLTMGMMLSIPMILAGGWLLWKSLKEPIRDDAEAHEPA.

7 helical membrane passes run Phe-19–Trp-39, Leu-67–Tyr-87, Ile-108–Leu-128, Leu-143–Gly-163, Gln-203–Tyr-223, Gly-232–Val-252, and Leu-264–Leu-284. An a 1,2-diacyl-sn-glycero-3-phospho-(1'-sn-glycerol)-binding site is contributed by Arg-156.

Belongs to the Lgt family.

Its subcellular location is the cell inner membrane. It catalyses the reaction L-cysteinyl-[prolipoprotein] + a 1,2-diacyl-sn-glycero-3-phospho-(1'-sn-glycerol) = an S-1,2-diacyl-sn-glyceryl-L-cysteinyl-[prolipoprotein] + sn-glycerol 1-phosphate + H(+). Its pathway is protein modification; lipoprotein biosynthesis (diacylglyceryl transfer). Its function is as follows. Catalyzes the transfer of the diacylglyceryl group from phosphatidylglycerol to the sulfhydryl group of the N-terminal cysteine of a prolipoprotein, the first step in the formation of mature lipoproteins. This is Phosphatidylglycerol--prolipoprotein diacylglyceryl transferase from Caulobacter vibrioides (strain ATCC 19089 / CIP 103742 / CB 15) (Caulobacter crescentus).